Consider the following 223-residue polypeptide: Deoxyribose-phosphate aldolase (223 aa).

Residue aspartate 91 is the Proton donor/acceptor of the active site. Lysine 153 (schiff-base intermediate with acetaldehyde) is an active-site residue. The active-site Proton donor/acceptor is the lysine 183.

Belongs to the DeoC/FbaB aldolase family. DeoC type 1 subfamily.

The protein localises to the cytoplasm. The catalysed reaction is 2-deoxy-D-ribose 5-phosphate = D-glyceraldehyde 3-phosphate + acetaldehyde. The protein operates within carbohydrate degradation; 2-deoxy-D-ribose 1-phosphate degradation; D-glyceraldehyde 3-phosphate and acetaldehyde from 2-deoxy-alpha-D-ribose 1-phosphate: step 2/2. In terms of biological role, catalyzes a reversible aldol reaction between acetaldehyde and D-glyceraldehyde 3-phosphate to generate 2-deoxy-D-ribose 5-phosphate. The polypeptide is Deoxyribose-phosphate aldolase (Mycoplasmopsis synoviae (strain 53) (Mycoplasma synoviae)).